The primary structure comprises 147 residues: Probable flagellum biosynthesis repressor protein FlbT (147 aa).

The protein belongs to the FlbT family.

Has a post-transcriptional repressor function in flagellum biogenesis. Associates with the 5'-UTR of fljK mRNA and promotes its degradation. This Mesorhizobium japonicum (strain LMG 29417 / CECT 9101 / MAFF 303099) (Mesorhizobium loti (strain MAFF 303099)) protein is Probable flagellum biosynthesis repressor protein FlbT.